A 233-amino-acid chain; its full sequence is Superoxide dismutase [Mn], mitochondrial (233 aa).

Residues 1 to 26 constitute a mitochondrion transit peptide; it reads MFAKTAAANLTKKGGLSLLSTTARRT. Positions 52 and 107 each coordinate Mn(2+). A phosphothreonine mark is found at Thr-147 and Thr-149. Residues Asp-194 and His-198 each contribute to the Mn(2+) site.

It belongs to the iron/manganese superoxide dismutase family. Homotetramer. The cofactor is Mn(2+).

It is found in the mitochondrion matrix. It carries out the reaction 2 superoxide + 2 H(+) = H2O2 + O2. Functionally, destroys superoxide anion radicals which are normally produced within the cells and which are toxic to biological systems. In Saccharomyces cerevisiae (strain ATCC 204508 / S288c) (Baker's yeast), this protein is Superoxide dismutase [Mn], mitochondrial (SOD2).